We begin with the raw amino-acid sequence, 332 residues long: Transcription initiation factor IIB 2 (332 aa).

Residues 1-10 show a composition bias toward polar residues; it reads MSDTITTRTY. The segment at 1–36 is disordered; that stretch reads MSDTITTRTYSADAKSRDVRPRESERDETQQDETQV. Residues 14-29 are compositionally biased toward basic and acidic residues; sequence AKSRDVRPRESERDET. A TFIIB-type zinc finger spans residues 33–63; the sequence is ETQVCPECSGHLVTDEEHGETICEDCGLVVE. 4 residues coordinate Zn(2+): C37, C40, C55, and C58. Residues 77-106 form a disordered region; it reads DSAERDSKSRVGAPTTKMMHDKGLSTNIGW. Tandem repeats lie at residues 149-232 and 243-324.

This sequence belongs to the TFIIB family.

Stabilizes TBP binding to an archaeal box-A promoter. Also responsible for recruiting RNA polymerase II to the pre-initiation complex (DNA-TBP-TFIIB). This is Transcription initiation factor IIB 2 from Haloferax volcanii (strain ATCC 29605 / DSM 3757 / JCM 8879 / NBRC 14742 / NCIMB 2012 / VKM B-1768 / DS2) (Halobacterium volcanii).